The primary structure comprises 441 residues: Amino-acid acetyltransferase (441 aa).

An N-acetyltransferase domain is found at 295–434 (EQVRRATIND…QALYNYQRRS (140 aa)).

Belongs to the acetyltransferase family. ArgA subfamily. As to quaternary structure, homohexamer.

It localises to the cytoplasm. The catalysed reaction is L-glutamate + acetyl-CoA = N-acetyl-L-glutamate + CoA + H(+). The protein operates within amino-acid biosynthesis; L-arginine biosynthesis; N(2)-acetyl-L-ornithine from L-glutamate: step 1/4. This is Amino-acid acetyltransferase from Pectobacterium carotovorum subsp. carotovorum (strain PC1).